The sequence spans 455 residues: ATP-dependent protease ATPase subunit HslU (455 aa).

ATP is bound by residues V23, 65-70, D266, E333, and R405; that span reads GVGKTE.

The protein belongs to the ClpX chaperone family. HslU subfamily. In terms of assembly, a double ring-shaped homohexamer of HslV is capped on each side by a ring-shaped HslU homohexamer. The assembly of the HslU/HslV complex is dependent on binding of ATP.

The protein localises to the cytoplasm. Functionally, ATPase subunit of a proteasome-like degradation complex; this subunit has chaperone activity. The binding of ATP and its subsequent hydrolysis by HslU are essential for unfolding of protein substrates subsequently hydrolyzed by HslV. HslU recognizes the N-terminal part of its protein substrates and unfolds these before they are guided to HslV for hydrolysis. In Xanthomonas campestris pv. campestris (strain 8004), this protein is ATP-dependent protease ATPase subunit HslU.